Here is a 184-residue protein sequence, read N- to C-terminus: tRNA (cytidine(56)-2'-O)-methyltransferase (184 aa).

Residues Leu87, 112–116, and 130–137 each bind S-adenosyl-L-methionine; these read GAEKV and VANQPHSE.

The protein belongs to the aTrm56 family. Homodimer.

It localises to the cytoplasm. The catalysed reaction is cytidine(56) in tRNA + S-adenosyl-L-methionine = 2'-O-methylcytidine(56) in tRNA + S-adenosyl-L-homocysteine + H(+). Functionally, specifically catalyzes the AdoMet-dependent 2'-O-ribose methylation of cytidine at position 56 in tRNAs. The protein is tRNA (cytidine(56)-2'-O)-methyltransferase of Methanocorpusculum labreanum (strain ATCC 43576 / DSM 4855 / Z).